A 559-amino-acid polypeptide reads, in one-letter code: DNA ligase (559 aa).

Glu-248 serves as a coordination point for ATP. Catalysis depends on Lys-250, which acts as the N6-AMP-lysine intermediate. Residues Arg-255, Arg-270, Glu-300, Phe-341, Arg-417, and Lys-423 each contribute to the ATP site.

This sequence belongs to the ATP-dependent DNA ligase family. The cofactor is Mg(2+).

It catalyses the reaction ATP + (deoxyribonucleotide)n-3'-hydroxyl + 5'-phospho-(deoxyribonucleotide)m = (deoxyribonucleotide)n+m + AMP + diphosphate.. In terms of biological role, DNA ligase that seals nicks in double-stranded DNA during DNA replication, DNA recombination and DNA repair. The chain is DNA ligase from Methanopyrus kandleri (strain AV19 / DSM 6324 / JCM 9639 / NBRC 100938).